We begin with the raw amino-acid sequence, 339 residues long: Serpentine receptor class alpha-20 (339 aa).

The next 6 helical transmembrane spans lie at 30-50 (VSFV…VLAI), 113-132 (LYFY…SLTF), 151-171 (VSIS…YFGL), 199-219 (FRTT…YLNV), 249-269 (CILI…VNYI), and 284-304 (IAPF…VIYF).

The protein belongs to the nematode receptor-like protein sra family.

The protein resides in the membrane. The protein is Serpentine receptor class alpha-20 (sra-20) of Caenorhabditis elegans.